A 129-amino-acid polypeptide reads, in one-letter code: MANPKPQAKKKIKKNIPKGIAHIHSTFNNTIVTVSDEKGNVLSWSSAGAIGFKGSKKSTPYAAQLISEAAAKGAMDNGVKTVSVEVKGPGPGRDAAIRALQMAGLEITSIKDTTPIPHNGVRPRKRPRG.

This sequence belongs to the universal ribosomal protein uS11 family. As to quaternary structure, part of the 30S ribosomal subunit. Interacts with proteins S7 and S18. Binds to IF-3.

Its function is as follows. Located on the platform of the 30S subunit, it bridges several disparate RNA helices of the 16S rRNA. Forms part of the Shine-Dalgarno cleft in the 70S ribosome. The polypeptide is Small ribosomal subunit protein uS11 (Mycoplasma mycoides subsp. mycoides SC (strain CCUG 32753 / NCTC 10114 / PG1)).